Consider the following 568-residue polypeptide: CTP synthase (568 aa).

Residues 1-276 (MPQARTIKHV…DAYLVRRLGL (276 aa)) are amidoligase domain. Ser-18 is a binding site for CTP. A UTP-binding site is contributed by Ser-18. ATP-binding positions include 19–24 (SLGKGL) and Asp-76. 2 residues coordinate Mg(2+): Asp-76 and Glu-150. Residues 157–159 (DIE), 197–202 (KTKPTQ), and Lys-233 contribute to the CTP site. UTP is bound by residues 197-202 (KTKPTQ) and Lys-233. Residues 301-550 (RIALVGKYVD…VNAALEYRAA (250 aa)) enclose the Glutamine amidotransferase type-1 domain. Gly-364 provides a ligand contact to L-glutamine. Cys-391 acts as the Nucleophile; for glutamine hydrolysis in catalysis. L-glutamine contacts are provided by residues 392–395 (LGLQ), Glu-415, and Arg-476. Active-site residues include His-523 and Glu-525.

The protein belongs to the CTP synthase family. In terms of assembly, homotetramer.

The catalysed reaction is UTP + L-glutamine + ATP + H2O = CTP + L-glutamate + ADP + phosphate + 2 H(+). It catalyses the reaction L-glutamine + H2O = L-glutamate + NH4(+). The enzyme catalyses UTP + NH4(+) + ATP = CTP + ADP + phosphate + 2 H(+). The protein operates within pyrimidine metabolism; CTP biosynthesis via de novo pathway; CTP from UDP: step 2/2. Allosterically activated by GTP, when glutamine is the substrate; GTP has no effect on the reaction when ammonia is the substrate. The allosteric effector GTP functions by stabilizing the protein conformation that binds the tetrahedral intermediate(s) formed during glutamine hydrolysis. Inhibited by the product CTP, via allosteric rather than competitive inhibition. Catalyzes the ATP-dependent amination of UTP to CTP with either L-glutamine or ammonia as the source of nitrogen. Regulates intracellular CTP levels through interactions with the four ribonucleotide triphosphates. This is CTP synthase from Saccharopolyspora erythraea (strain ATCC 11635 / DSM 40517 / JCM 4748 / NBRC 13426 / NCIMB 8594 / NRRL 2338).